Consider the following 93-residue polypeptide: Large ribosomal subunit protein uL23cz/uL23cy (93 aa).

Belongs to the universal ribosomal protein uL23 family. Part of the 50S ribosomal subunit.

The protein localises to the plastid. It is found in the chloroplast. In terms of biological role, binds to 23S rRNA. This Gossypium barbadense (Sea Island cotton) protein is Large ribosomal subunit protein uL23cz/uL23cy (rpl23-A).